Consider the following 305-residue polypeptide: Cysteine synthase (305 aa).

Lys-45 carries the post-translational modification N6-(pyridoxal phosphate)lysine. Pyridoxal 5'-phosphate contacts are provided by residues Asn-75, 179–183 (GSGGT), and Ser-266.

Belongs to the cysteine synthase/cystathionine beta-synthase family. Homodimer. Pyridoxal 5'-phosphate serves as cofactor.

The catalysed reaction is O-acetyl-L-serine + hydrogen sulfide = L-cysteine + acetate. The protein operates within amino-acid biosynthesis; L-cysteine biosynthesis; L-cysteine from L-serine: step 2/2. The chain is Cysteine synthase (cysM) from Helicobacter pylori (strain J99 / ATCC 700824) (Campylobacter pylori J99).